Reading from the N-terminus, the 284-residue chain is Elongation factor Ts (284 aa).

The tract at residues 80-83 (TDFV) is involved in Mg(2+) ion dislocation from EF-Tu.

The protein belongs to the EF-Ts family.

Its subcellular location is the cytoplasm. In terms of biological role, associates with the EF-Tu.GDP complex and induces the exchange of GDP to GTP. It remains bound to the aminoacyl-tRNA.EF-Tu.GTP complex up to the GTP hydrolysis stage on the ribosome. The chain is Elongation factor Ts from Neisseria meningitidis serogroup A / serotype 4A (strain DSM 15465 / Z2491).